The sequence spans 391 residues: Protein CAJ1 (391 aa).

In terms of domain architecture, J spans glutamate 4–glutamate 73. A disordered region spans residues lysine 119 to glutamine 161. The span at glutamate 129–glutamine 161 shows a compositional bias: basic and acidic residues. Lysine 132 participates in a covalent cross-link: Glycyl lysine isopeptide (Lys-Gly) (interchain with G-Cter in ubiquitin).

The polypeptide is Protein CAJ1 (CAJ1) (Saccharomyces cerevisiae (strain ATCC 204508 / S288c) (Baker's yeast)).